The chain runs to 101 residues: Small ribosomal subunit protein uS14 (101 aa).

It belongs to the universal ribosomal protein uS14 family. In terms of assembly, part of the 30S ribosomal subunit. Contacts proteins S3 and S10.

Its function is as follows. Binds 16S rRNA, required for the assembly of 30S particles and may also be responsible for determining the conformation of the 16S rRNA at the A site. The polypeptide is Small ribosomal subunit protein uS14 (Methylibium petroleiphilum (strain ATCC BAA-1232 / LMG 22953 / PM1)).